A 266-amino-acid polypeptide reads, in one-letter code: N-acetylneuraminate lyase B (266 aa).

Thr51 and Thr52 together coordinate aceneuramate. Tyr143 acts as the Proton donor in catalysis. Lys173 (schiff-base intermediate with substrate) is an active-site residue. 5 residues coordinate aceneuramate: Ser175, Gly197, Asp199, Glu200, and Ser216.

Belongs to the DapA family. NanA subfamily. Homotetramer.

The protein resides in the cytoplasm. The enzyme catalyses aceneuramate = aldehydo-N-acetyl-D-mannosamine + pyruvate. The protein operates within amino-sugar metabolism; N-acetylneuraminate degradation. Catalyzes the cleavage of N-acetylneuraminic acid (sialic acid) to form pyruvate and N-acetylmannosamine via a Schiff base intermediate. It prevents sialic acids from being recycled and returning to the cell surface. Involved in the N-glycolylneuraminic acid (Neu5Gc) degradation pathway. This chain is N-acetylneuraminate lyase B (npl-b), found in Xenopus laevis (African clawed frog).